The following is a 423-amino-acid chain: 5-hydroxytryptamine receptor 1A-alpha (423 aa).

Over 1-47 (MDLRATSSNDSNATSGYSDTAAVDWDEGENATGSGSLPDPELSYQII) the chain is Extracellular. Asn-9, Asn-12, and Asn-30 each carry an N-linked (GlcNAc...) asparagine glycan. Residues 48–68 (TSLFLGALILCSIFGNSCVVA) traverse the membrane as a helical segment. Over 69–82 (AIALERSLQNVANY) the chain is Cytoplasmic. The helical transmembrane segment at 83 to 107 (LIGSLAVTDLMVSVLVLPMAALYQV) threads the bilayer. The Extracellular segment spans residues 108–116 (LNKWTLGQD). A helical transmembrane segment spans residues 117–141 (ICDLFIALDVLCCTSSILHLCAIAL). Cys-118 and Cys-196 are disulfide-bonded. Residues Asp-125 and Cys-129 each contribute to the serotonin site. The DRY motif; important for ligand-induced conformation changes motif lies at 142 to 144 (DRY). The Cytoplasmic segment spans residues 142–161 (DRYWAITDPIDYVNKRTPRR). Residues 162–183 (AAVLISVTWLIGFSISIPPMLG) form a helical membrane-spanning segment. Over 184–202 (WRSAEDRANPDACIISQDP) the chain is Extracellular. Residues 203–225 (GYTIYSTFGAFYIPLILMLVLYG) form a helical membrane-spanning segment. Residues 226–347 (RIFKAARFRI…LARERKTVKT (122 aa)) are Cytoplasmic-facing. The disordered stretch occupies residues 311–332 (LPLPNTPQSSSHENINEKTTGT). A compositionally biased stretch (polar residues) spans 316-329 (TPQSSSHENINEKT). 1D-myo-inositol 4-phosphate-binding residues include Ser-320, Lys-346, Thr-347, and Gly-353. The chain crosses the membrane as a helical span at residues 348–371 (LGIIMGTFIFCWLPFFIVALVLPF). Topologically, residues 372 to 379 (CAENCYMP) are extracellular. Residues 380-404 (EWLGAVINWLGYSNSLLNPIIYAYF) form a helical membrane-spanning segment. The NPxxY motif; important for ligand-induced conformation changes and signaling signature appears at 397–401 (NPIIY). 1D-myo-inositol 4-phosphate contacts are provided by Phe-404, Asn-405, and Lys-406. The Cytoplasmic segment spans residues 405 to 423 (NKDFQSAFKKILRCKFHRH).

This sequence belongs to the G-protein coupled receptor 1 family. 5-hydroxytryptamine receptor subfamily.

The protein localises to the cell membrane. With respect to regulation, G-protein coupled receptor activity is regulated by lipids: phosphatidylinositol 4-phosphate increases HTR1A-mediated activity. In terms of biological role, G-protein coupled receptor for 5-hydroxytryptamine (serotonin). Also functions as a receptor for various drugs and psychoactive substances. Ligand binding causes a conformation change that triggers signaling via guanine nucleotide-binding proteins (G proteins) and modulates the activity of downstream effectors, such as adenylate cyclase. HTR1A is coupled to G(i)/G(o) G alpha proteins and mediates inhibitory neurotransmission: signaling inhibits adenylate cyclase activity and activates a phosphatidylinositol-calcium second messenger system that regulates the release of Ca(2+) ions from intracellular stores. Beta-arrestin family members regulate signaling by mediating both receptor desensitization and resensitization processes. In Takifugu rubripes (Japanese pufferfish), this protein is 5-hydroxytryptamine receptor 1A-alpha (htr1aa).